Here is a 271-residue protein sequence, read N- to C-terminus: uncharacterized protein (271 aa).

Residues 1–20 form a disordered region; it reads MPDLHTLPAGSRPERAIRNN.

It belongs to the PEP2 family.

This is an uncharacterized protein from Aspergillus terreus (strain NIH 2624 / FGSC A1156).